The following is a 263-amino-acid chain: Endonuclease 8 (263 aa).

Proline 2 (schiff-base intermediate with DNA) is an active-site residue. Glutamate 3 serves as the catalytic Proton donor. The Proton donor; for beta-elimination activity role is filled by lysine 53. DNA-binding residues include glutamine 70, arginine 125, and asparagine 169. An FPG-type zinc finger spans residues 229–263 (KVFHRDGELCERCGGIIEKTTLSSRPFYWCPGCQH). Arginine 253 (proton donor; for delta-elimination activity) is an active-site residue.

The protein belongs to the FPG family. Zn(2+) is required as a cofactor.

It carries out the reaction 2'-deoxyribonucleotide-(2'-deoxyribose 5'-phosphate)-2'-deoxyribonucleotide-DNA = a 3'-end 2'-deoxyribonucleotide-(2,3-dehydro-2,3-deoxyribose 5'-phosphate)-DNA + a 5'-end 5'-phospho-2'-deoxyribonucleoside-DNA + H(+). Involved in base excision repair of DNA damaged by oxidation or by mutagenic agents. Acts as a DNA glycosylase that recognizes and removes damaged bases. Has a preference for oxidized pyrimidines, such as thymine glycol, 5,6-dihydrouracil and 5,6-dihydrothymine. Has AP (apurinic/apyrimidinic) lyase activity and introduces nicks in the DNA strand. Cleaves the DNA backbone by beta-delta elimination to generate a single-strand break at the site of the removed base with both 3'- and 5'-phosphates. The chain is Endonuclease 8 from Escherichia coli (strain 55989 / EAEC).